Reading from the N-terminus, the 241-residue chain is ATP synthase subunit a (241 aa).

5 consecutive transmembrane segments (helical) span residues 30–50 (GQVF…ISLG), 91–111 (FIGT…LIPW), 128–148 (INTT…AGLS), 193–213 (LVVG…VMFL), and 214–234 (GLFT…YYIG).

It belongs to the ATPase A chain family. In terms of assembly, F-type ATPases have 2 components, CF(1) - the catalytic core - and CF(0) - the membrane proton channel. CF(1) has five subunits: alpha(3), beta(3), gamma(1), delta(1), epsilon(1). CF(0) has four main subunits: a, b, b' and c.

The protein localises to the cellular thylakoid membrane. In terms of biological role, key component of the proton channel; it plays a direct role in the translocation of protons across the membrane. In Prochlorococcus marinus (strain MIT 9515), this protein is ATP synthase subunit a.